The following is a 484-amino-acid chain: Protein nucleotidyltransferase YdiU (484 aa).

Residues Gly81, Gly83, Arg84, Lys103, Asp115, Gly116, Arg166, and Arg173 each coordinate ATP. The active-site Proton acceptor is the Asp244. Mg(2+) is bound by residues Asn245 and Asp254. Asp254 contacts ATP.

It belongs to the SELO family. Mg(2+) is required as a cofactor. It depends on Mn(2+) as a cofactor.

It carries out the reaction L-seryl-[protein] + ATP = 3-O-(5'-adenylyl)-L-seryl-[protein] + diphosphate. It catalyses the reaction L-threonyl-[protein] + ATP = 3-O-(5'-adenylyl)-L-threonyl-[protein] + diphosphate. The catalysed reaction is L-tyrosyl-[protein] + ATP = O-(5'-adenylyl)-L-tyrosyl-[protein] + diphosphate. The enzyme catalyses L-histidyl-[protein] + UTP = N(tele)-(5'-uridylyl)-L-histidyl-[protein] + diphosphate. It carries out the reaction L-seryl-[protein] + UTP = O-(5'-uridylyl)-L-seryl-[protein] + diphosphate. It catalyses the reaction L-tyrosyl-[protein] + UTP = O-(5'-uridylyl)-L-tyrosyl-[protein] + diphosphate. Its function is as follows. Nucleotidyltransferase involved in the post-translational modification of proteins. It can catalyze the addition of adenosine monophosphate (AMP) or uridine monophosphate (UMP) to a protein, resulting in modifications known as AMPylation and UMPylation. The sequence is that of Protein nucleotidyltransferase YdiU from Shewanella sp. (strain MR-4).